We begin with the raw amino-acid sequence, 353 residues long: Purine nucleoside phosphorylase (353 aa).

The span at 1–16 (MSKFSYLQNGKASTNG) shows a compositional bias: polar residues. Positions 1–42 (MSKFSYLQNGKASTNGVPHANGHHQQHQNGHSNGVARNGGTA) are disordered. Phosphate contacts are provided by residues Ser98, His129, 149–151 (RFH), and Ala181. Residue Glu266 participates in a purine D-ribonucleoside binding. Residue Ser285 participates in phosphate binding. Asn308 provides a ligand contact to a purine D-ribonucleoside.

The protein belongs to the PNP/MTAP phosphorylase family. As to quaternary structure, homotrimer.

It catalyses the reaction inosine + phosphate = alpha-D-ribose 1-phosphate + hypoxanthine. It carries out the reaction guanosine + phosphate = alpha-D-ribose 1-phosphate + guanine. The enzyme catalyses 2'-deoxyguanosine + phosphate = 2-deoxy-alpha-D-ribose 1-phosphate + guanine. The catalysed reaction is 2'-deoxyinosine + phosphate = 2-deoxy-alpha-D-ribose 1-phosphate + hypoxanthine. It participates in purine metabolism; purine nucleoside salvage. With respect to regulation, inhibited by 5'-deaza-1'-aza-2c-deoxy-1'-(9-methylene) immucillin-H (DADMe-ImmH). Its function is as follows. As part of the purine salvage pathway, catalyzes the phosphorolytic breakdown of the N-glycosidic bond in the beta-(deoxy)ribonucleoside molecules, with the formation of the corresponding free purine bases and pentose-1-phosphate. Preferentially acts on 2'-deoxyinosine and inosine, and to a lesser extent on 2'-deoxyguanosine and guanosine. Has no activity towards adenosine or 2'-deoxyadenosine. In Anopheles gambiae (African malaria mosquito), this protein is Purine nucleoside phosphorylase.